The primary structure comprises 735 residues: Photosystem I P700 chlorophyll a apoprotein A2 (735 aa).

Transmembrane regions (helical) follow at residues 47–70 (IFAS…FHVA), 136–159 (LFTG…LHLQ), 176–200 (LNHH…HVAI), 274–292 (MAHH…GHMY), 331–354 (LHFQ…QHIY), 370–396 (AALY…IFFI), 418–440 (AIIS…LYVH), and 518–536 (FLVH…LILV). The [4Fe-4S] cluster site is built by Cys-560 and Cys-569. 2 consecutive transmembrane segments (helical) span residues 576 to 597 (AFYL…YFHW) and 644 to 666 (LSVW…MFLI). Chlorophyll a is bound by residues His-655, Met-663, and Tyr-671. Phylloquinone is bound at residue Trp-672. The chain crosses the membrane as a helical span at residues 708-728 (LVGLVHFSVGYIFTYAAFLIA).

This sequence belongs to the PsaA/PsaB family. In terms of assembly, the PsaA/B heterodimer binds the P700 chlorophyll special pair and subsequent electron acceptors. PSI consists of a core antenna complex that captures photons, and an electron transfer chain that converts photonic excitation into a charge separation. The eukaryotic PSI reaction center is composed of at least 11 subunits. Requires P700 is a chlorophyll a/chlorophyll a' dimer, A0 is one or more chlorophyll a, A1 is one or both phylloquinones and FX is a shared 4Fe-4S iron-sulfur center. as cofactor.

It is found in the plastid. It localises to the chloroplast thylakoid membrane. The enzyme catalyses reduced [plastocyanin] + hnu + oxidized [2Fe-2S]-[ferredoxin] = oxidized [plastocyanin] + reduced [2Fe-2S]-[ferredoxin]. Its function is as follows. PsaA and PsaB bind P700, the primary electron donor of photosystem I (PSI), as well as the electron acceptors A0, A1 and FX. PSI is a plastocyanin/cytochrome c6-ferredoxin oxidoreductase, converting photonic excitation into a charge separation, which transfers an electron from the donor P700 chlorophyll pair to the spectroscopically characterized acceptors A0, A1, FX, FA and FB in turn. Oxidized P700 is reduced on the lumenal side of the thylakoid membrane by plastocyanin or cytochrome c6. The polypeptide is Photosystem I P700 chlorophyll a apoprotein A2 (Chlamydomonas moewusii (Chlamydomonas eugametos)).